A 178-amino-acid polypeptide reads, in one-letter code: Adenine phosphoribosyltransferase (178 aa).

Belongs to the purine/pyrimidine phosphoribosyltransferase family. In terms of assembly, homodimer.

The protein resides in the cytoplasm. The enzyme catalyses AMP + diphosphate = 5-phospho-alpha-D-ribose 1-diphosphate + adenine. It participates in purine metabolism; AMP biosynthesis via salvage pathway; AMP from adenine: step 1/1. Its function is as follows. Catalyzes a salvage reaction resulting in the formation of AMP, that is energically less costly than de novo synthesis. This Pseudoalteromonas atlantica (strain T6c / ATCC BAA-1087) protein is Adenine phosphoribosyltransferase.